The chain runs to 299 residues: CRISPR-associated endonuclease Cas1 3 (299 aa).

The Mn(2+) site is built by glutamate 143, histidine 210, and aspartate 223.

This sequence belongs to the CRISPR-associated endonuclease Cas1 family. As to quaternary structure, homodimer, forms a heterotetramer with a Cas2 homodimer. Mg(2+) serves as cofactor. Requires Mn(2+) as cofactor.

Functionally, CRISPR (clustered regularly interspaced short palindromic repeat), is an adaptive immune system that provides protection against mobile genetic elements (viruses, transposable elements and conjugative plasmids). CRISPR clusters contain spacers, sequences complementary to antecedent mobile elements, and target invading nucleic acids. CRISPR clusters are transcribed and processed into CRISPR RNA (crRNA). Acts as a dsDNA endonuclease. Involved in the integration of spacer DNA into the CRISPR cassette. In Methanospirillum hungatei JF-1 (strain ATCC 27890 / DSM 864 / NBRC 100397 / JF-1), this protein is CRISPR-associated endonuclease Cas1 3.